The sequence spans 917 residues: Glutamate receptor (917 aa).

The signal sequence occupies residues 1 to 19 (MDTCVFPLVVLWISMRITS). Residues 20 to 556 (TLDEVPIGGI…HFFSFMEPLS (537 aa)) are Extracellular-facing. N-linked (GlcNAc...) asparagine glycans are attached at residues asparagine 62, asparagine 95, asparagine 121, asparagine 125, asparagine 229, asparagine 251, asparagine 261, asparagine 272, asparagine 418, asparagine 419, asparagine 424, and asparagine 491. The chain crosses the membrane as a helical span at residues 557 to 577 (SEIWMCIVFAYIGVSVVLFLV). Topologically, residues 578-631 (SRFSPNEWHLSEAHHSYIANDFSISNSLWFSLGAFMQQGCDISPRSMSGRIVGS) are cytoplasmic. The helical transmembrane segment at 632–652 (VWWFFTLIIISSYTANLAAFL) threads the bilayer. Residues 653-818 (TVERMLTPID…GAQSALTLAN (166 aa)) lie on the Extracellular side of the membrane. Asparagine 775 carries an N-linked (GlcNAc...) asparagine glycan. The chain crosses the membrane as a helical span at residues 819 to 839 (VAGIFYILIGGLVVAVLSAAF). Residues 840–917 (EFLYKSRMDS…FEDSNTHTEV (78 aa)) lie on the Cytoplasmic side of the membrane. The disordered stretch occupies residues 871 to 896 (HIDSEQKTTGNGTRRRSHNSVTYTYT).

This sequence belongs to the glutamate-gated ion channel (TC 1.A.10.1) family.

It is found in the cell membrane. The protein localises to the postsynaptic cell membrane. In terms of biological role, receptor for glutamate. L-glutamate acts as an excitatory neurotransmitter at many synapses in the central nervous system. The postsynaptic actions of Glu are mediated by a variety of receptors. This Lymnaea stagnalis (Great pond snail) protein is Glutamate receptor.